A 257-amino-acid polypeptide reads, in one-letter code: Imidazole glycerol phosphate synthase subunit HisF (257 aa).

Residues Asp-11 and Asp-130 contribute to the active site.

Belongs to the HisA/HisF family. Heterodimer of HisH and HisF.

It localises to the cytoplasm. It catalyses the reaction 5-[(5-phospho-1-deoxy-D-ribulos-1-ylimino)methylamino]-1-(5-phospho-beta-D-ribosyl)imidazole-4-carboxamide + L-glutamine = D-erythro-1-(imidazol-4-yl)glycerol 3-phosphate + 5-amino-1-(5-phospho-beta-D-ribosyl)imidazole-4-carboxamide + L-glutamate + H(+). The protein operates within amino-acid biosynthesis; L-histidine biosynthesis; L-histidine from 5-phospho-alpha-D-ribose 1-diphosphate: step 5/9. Functionally, IGPS catalyzes the conversion of PRFAR and glutamine to IGP, AICAR and glutamate. The HisF subunit catalyzes the cyclization activity that produces IGP and AICAR from PRFAR using the ammonia provided by the HisH subunit. This chain is Imidazole glycerol phosphate synthase subunit HisF, found in Psychromonas ingrahamii (strain DSM 17664 / CCUG 51855 / 37).